The following is a 625-amino-acid chain: RalA-binding protein 1 (625 aa).

2 stretches are compositionally biased toward basic and acidic residues: residues 1–11 (MDFDSPEEKEF) and 20–60 (ADAK…KDRG). Residues 1–172 (MDFDSPEEKE…SKQLSQQQDD (172 aa)) are disordered. A phosphoserine mark is found at Ser-68 and Ser-69. The span at 94-157 (KSKEKREKSR…EKDKKADKKD (64 aa)) shows a compositional bias: basic and acidic residues. In terms of domain architecture, Rho-GAP spans 191–385 (VSLATERSRC…PLTSTSPKLP (195 aa)). The segment at 443-500 (QEKTAEEVDNSSSAPPAVASEDTTDSKPAGTPAVSTNNSISQEEPKTDTLTPKDAPND) is disordered. Residues 475–484 (AVSTNNSISQ) show a composition bias toward polar residues.

In terms of assembly, interacts with CycB and numb.

In terms of biological role, participates in receptor endocytosis during interphase, is also involved in mitotic processes when endocytosis is switched off. In Drosophila melanogaster (Fruit fly), this protein is RalA-binding protein 1.